The chain runs to 100 residues: uncharacterized protein (100 aa).

This is an uncharacterized protein from Acheta domesticus (House cricket).